We begin with the raw amino-acid sequence, 324 residues long: Dermonecrotic toxin Hl-PLD1 (324 aa).

Residues 1–35 form the signal peptide; the sequence is MAHCYYNSKRGCNRVMKTVALVVLISTVMVEESRG. H50 is an active-site residue. Positions 70 and 72 each coordinate Mg(2+). Catalysis depends on H86, which acts as the Nucleophile. 2 disulfide bridges follow: C90-C96 and C92-C236. D130 contacts Mg(2+).

It belongs to the arthropod phospholipase D family. Class II subfamily. Mg(2+) is required as a cofactor. In terms of tissue distribution, expressed by the venom gland.

Its subcellular location is the secreted. The catalysed reaction is an N-(acyl)-sphingosylphosphocholine = an N-(acyl)-sphingosyl-1,3-cyclic phosphate + choline. It catalyses the reaction an N-(acyl)-sphingosylphosphoethanolamine = an N-(acyl)-sphingosyl-1,3-cyclic phosphate + ethanolamine. It carries out the reaction a 1-acyl-sn-glycero-3-phosphocholine = a 1-acyl-sn-glycero-2,3-cyclic phosphate + choline. The enzyme catalyses a 1-acyl-sn-glycero-3-phosphoethanolamine = a 1-acyl-sn-glycero-2,3-cyclic phosphate + ethanolamine. Its function is as follows. Dermonecrotic toxins cleave the phosphodiester linkage between the phosphate and headgroup of certain phospholipids (sphingolipid and lysolipid substrates), forming an alcohol (often choline) and a cyclic phosphate. This toxin acts on sphingomyelin (SM) with a high activity. It may also act on ceramide phosphoethanolamine (CPE), lysophosphatidylcholine (LPC) and lysophosphatidylethanolamine (LPE), but not on lysophosphatidylserine (LPS), and lysophosphatidylglycerol (LPG). It acts by transphosphatidylation, releasing exclusively cyclic phosphate products as second products. In vivo, shows dermonecrotic activity when intradermally injected into rabbit skin and is lethal to mice. Induces increased vascular permeability, edema, inflammatory response, and platelet aggregation. Does not show hemolytic activity (at up to 50 ug). The polypeptide is Dermonecrotic toxin Hl-PLD1 (Hemiscorpius lepturus (Scorpion)).